A 1435-amino-acid polypeptide reads, in one-letter code: DNA polymerase III PolC-type (1435 aa).

The region spanning 420–576 is the Exonuclease domain; the sequence is YVVFDVETTG…YDTEATAYIF (157 aa).

It belongs to the DNA polymerase type-C family. PolC subfamily.

It is found in the cytoplasm. The enzyme catalyses DNA(n) + a 2'-deoxyribonucleoside 5'-triphosphate = DNA(n+1) + diphosphate. Functionally, required for replicative DNA synthesis. This DNA polymerase also exhibits 3' to 5' exonuclease activity. The protein is DNA polymerase III PolC-type of Staphylococcus aureus.